The following is a 123-amino-acid chain: MEKLNQTNLLLRFTLEIAALISLGVYAWISFNGYFKYVLTLVLPIAVMIVWSVFAVPHDPSRSGQTVIAVNGVTRLVIELLIFAMAVAALYFSYLKPVSIVFLCLIILHYIISAERIKWLLNQ.

Helical transmembrane passes span Leu-9–Phe-31, Val-38–Val-56, Val-67–Tyr-91, and Val-98–Ala-114.

The protein to E.coli YhgE.

The protein localises to the cell membrane. This is an uncharacterized protein from Bacillus subtilis (strain 168).